The sequence spans 155 residues: Small ribosomal subunit protein uS7 (155 aa).

It belongs to the universal ribosomal protein uS7 family. Part of the 30S ribosomal subunit. Contacts proteins S9 and S11.

Its function is as follows. One of the primary rRNA binding proteins, it binds directly to 16S rRNA where it nucleates assembly of the head domain of the 30S subunit. Is located at the subunit interface close to the decoding center, probably blocks exit of the E-site tRNA. This Xanthomonas oryzae pv. oryzae (strain MAFF 311018) protein is Small ribosomal subunit protein uS7.